The chain runs to 591 residues: MAERTHACGKVTVEAVGQTVQLKGWVQKRRDLGGLIFIDLRDRTGIVQVVFNPETSKEALEVAETIRSEYVLHVEGTVVERGEGAINDNMATGRIEVQATKVNVLNAAKTTPIIIADDTDASEDVRLKYRYLDLRRPVMFNTFKMRHDVTKTIRNFLDTEEFLEVETPILTKSTPEGARDYLVPSRVHDGEFYALPQSPQLFKQLLMVGGFERYYQVARCFRDEDLRADRQPEFTQIDIEASFLTQDEILDMMERMMTKVMKDAKGVEVSAPFPRMKYADAMARYGSDKPDTCFEMELTDLSEFAADCGFKVFTSAVESGGQVKAINAKGAASKYSRKDIDALTEFVKVYGAKGLAWLKVEEDGLKGPIAKFFGEEDANVLMSTLEATAGDLLLFVADKKSVVADSLGALRLRLGKELELIDESKFNFLWVTDWPLLEYDEDADRYFAAHHPFTMPFREDVELLETAPEKARAQAYDLVLNGYELGGGSLRIYERDVQEKMFKALGFSQEEAQEQFGFLLEAFEYGTPPHGGIALGLDRLVMLLAGRTNLRDTIAFPKTASASCLLTEAPSPVAEAQLEELNLKLSLKEEK.

E176 is an L-aspartate binding site. The tract at residues Q200–K203 is aspartate. R222 is a binding site for L-aspartate. Residues R222 to E224 and Q231 contribute to the ATP site. H450 serves as a coordination point for L-aspartate. E484 is an ATP binding site. R491 provides a ligand contact to L-aspartate. ATP is bound at residue G536–R539.

Belongs to the class-II aminoacyl-tRNA synthetase family. Type 1 subfamily. In terms of assembly, homodimer.

It is found in the cytoplasm. It carries out the reaction tRNA(Asx) + L-aspartate + ATP = L-aspartyl-tRNA(Asx) + AMP + diphosphate. Functionally, aspartyl-tRNA synthetase with relaxed tRNA specificity since it is able to aspartylate not only its cognate tRNA(Asp) but also tRNA(Asn). Reaction proceeds in two steps: L-aspartate is first activated by ATP to form Asp-AMP and then transferred to the acceptor end of tRNA(Asp/Asn). The protein is Aspartate--tRNA(Asp/Asn) ligase of Bacillus cereus (strain ATCC 14579 / DSM 31 / CCUG 7414 / JCM 2152 / NBRC 15305 / NCIMB 9373 / NCTC 2599 / NRRL B-3711).